The primary structure comprises 486 residues: Monocarboxylate transporter 12 (486 aa).

At 1 to 9 (MTKITRVSL) the chain is on the cytoplasmic side. 12 consecutive transmembrane segments (helical) span residues 10 to 30 (ASPP…LVTI), 58 to 78 (AWIH…GSVV), 86 to 106 (AGIM…SFAT), 115 to 135 (LGVL…AMVG), 148 to 168 (IAMS…QLLI), 177 to 197 (LLIL…MRPI), 253 to 273 (FVVL…LFVY), 289 to 309 (AFLM…FGWL), 320 to 340 (YVCY…LPML), 353 to 373 (FGYF…EIVG), 383 to 403 (VVYF…GWLV), and 410 to 430 (TAAF…LGFV). Residues 431-486 (RIVKRMKRTQVPFPVKDSDPKLQLWTNGSVAYSVARELDQKDEEPLPKARSGCNLT) lie on the Cytoplasmic side of the membrane.

It belongs to the major facilitator superfamily. Monocarboxylate porter (TC 2.A.1.13) family. Interacts with isoform 2 of BSG; this interaction is required for its localization to the plasma membrane. Highly expressed in the lung, liver, kidney, and pancreas. Expressed in eye lens.

The protein resides in the cell membrane. It is found in the basolateral cell membrane. It carries out the reaction creatine(in) = creatine(out). The enzyme catalyses guanidinoacetate(in) = guanidinoacetate(out). With respect to regulation, creatine uptake is inhibited by carbonyl cyanide 3-chlorophenylhydrazone (CCCP) and by valinomycin. In terms of biological role, functions as a transporter for creatine and as well for its precursor guanidinoacetate. Transport of creatine and GAA is independent of resting membrane potential and extracellular Na(+), Cl(-), or pH. Contributes to the process of creatine biosynthesis and distribution. The polypeptide is Monocarboxylate transporter 12 (Mus musculus (Mouse)).